The chain runs to 298 residues: Ribosomal RNA small subunit methyltransferase A (298 aa).

S-adenosyl-L-methionine contacts are provided by Asn-35, Leu-37, Gly-62, Glu-83, Asp-108, and Asn-133.

Belongs to the class I-like SAM-binding methyltransferase superfamily. rRNA adenine N(6)-methyltransferase family. RsmA subfamily.

The protein localises to the cytoplasm. The enzyme catalyses adenosine(1518)/adenosine(1519) in 16S rRNA + 4 S-adenosyl-L-methionine = N(6)-dimethyladenosine(1518)/N(6)-dimethyladenosine(1519) in 16S rRNA + 4 S-adenosyl-L-homocysteine + 4 H(+). Specifically dimethylates two adjacent adenosines (A1518 and A1519) in the loop of a conserved hairpin near the 3'-end of 16S rRNA in the 30S particle. May play a critical role in biogenesis of 30S subunits. This is Ribosomal RNA small subunit methyltransferase A from Streptococcus pyogenes serotype M4 (strain MGAS10750).